A 202-amino-acid polypeptide reads, in one-letter code: Probable GTP-binding protein EngB (202 aa).

An EngB-type G domain is found at 22–197 (VFPEYAFIGR…LDYIENISKE (176 aa)). GTP-binding positions include 30–37 (GRSNVGKS), 57–61 (GKTML), 75–78 (DLPG), 142–145 (TKAD), and 173–178 (YFISSS). 2 residues coordinate Mg(2+): S37 and T59.

It belongs to the TRAFAC class TrmE-Era-EngA-EngB-Septin-like GTPase superfamily. EngB GTPase family. Mg(2+) is required as a cofactor.

In terms of biological role, necessary for normal cell division and for the maintenance of normal septation. In Bacteroides thetaiotaomicron (strain ATCC 29148 / DSM 2079 / JCM 5827 / CCUG 10774 / NCTC 10582 / VPI-5482 / E50), this protein is Probable GTP-binding protein EngB.